The chain runs to 496 residues: Putative zinc finger CCCH domain-containing protein 48 (496 aa).

Disordered stretches follow at residues M1–H77 and M108–D194. The span at H143–Y156 shows a compositional bias: acidic residues. C3H1-type zinc fingers lie at residues E377–D406, K439–V467, and L469–Y496.

The polypeptide is Putative zinc finger CCCH domain-containing protein 48 (Oryza sativa subsp. japonica (Rice)).